We begin with the raw amino-acid sequence, 398 residues long: Lipase member K (398 aa).

The signal sequence occupies residues 1–19 (MWWLLATTCCVLLSGPIDG). An AB hydrolase-1 domain is found at 78–377 (VVYLQHGLIA…HYNHMDFYLG (300 aa)). Serine 171 serves as the catalytic Nucleophile. Cysteine 245 and cysteine 254 are disulfide-bonded. N-linked (GlcNAc...) asparagine glycans are attached at residues asparagine 270 and asparagine 326. Residues aspartate 342 and histidine 371 each act as charge relay system in the active site.

Belongs to the AB hydrolase superfamily. Lipase family.

The protein resides in the secreted. Functionally, plays a highly specific role in the last step of keratinocyte differentiation. May have an essential function in lipid metabolism of the most differentiated epidermal layers. The protein is Lipase member K (Lipk) of Mus musculus (Mouse).